The sequence spans 91 residues: MALDSAKKREIIAKFGNDEKDTGSPAVQIALLTERINEINEHLQQHKHDHSSRLGLLKLVGQRKRLMRYLKRKDHDKYLEVITALNLRDRV.

It belongs to the universal ribosomal protein uS15 family. As to quaternary structure, part of the 30S ribosomal subunit. Forms a bridge to the 50S subunit in the 70S ribosome, contacting the 23S rRNA.

Its function is as follows. One of the primary rRNA binding proteins, it binds directly to 16S rRNA where it helps nucleate assembly of the platform of the 30S subunit by binding and bridging several RNA helices of the 16S rRNA. In terms of biological role, forms an intersubunit bridge (bridge B4) with the 23S rRNA of the 50S subunit in the ribosome. The protein is Small ribosomal subunit protein uS15 of Nautilia profundicola (strain ATCC BAA-1463 / DSM 18972 / AmH).